Here is a 372-residue protein sequence, read N- to C-terminus: Cytochrome b (372 aa).

4 consecutive transmembrane segments (helical) span residues 25 to 45 (FGSM…FLAL), 69 to 90 (WIMQ…YIHI), 105 to 125 (WLSG…GYVL), and 170 to 190 (FFAL…IHII). His75 and His89 together coordinate heme b. His174 and His188 together coordinate heme b. His193 contacts a ubiquinone. 4 helical membrane passes run 218–238 (YKDM…LSFA), 280–300 (LGGT…PFTH), 312–332 (LSQI…WTAS), and 339–358 (FITI…ITTP).

The protein belongs to the cytochrome b family. As to quaternary structure, the cytochrome bc1 complex contains 3 respiratory subunits (MT-CYB, CYC1 and UQCRFS1), 2 core proteins (UQCRC1 and UQCRC2) and probably 6 low-molecular weight proteins. It depends on heme b as a cofactor.

It is found in the mitochondrion inner membrane. Functionally, component of the ubiquinol-cytochrome c reductase complex (complex III or cytochrome b-c1 complex) that is part of the mitochondrial respiratory chain. The b-c1 complex mediates electron transfer from ubiquinol to cytochrome c. Contributes to the generation of a proton gradient across the mitochondrial membrane that is then used for ATP synthesis. The protein is Cytochrome b (MT-CYB) of Naja nivea (Cape cobra).